Here is a 204-residue protein sequence, read N- to C-terminus: Methylthioribulose-1-phosphate dehydratase (204 aa).

The Zn(2+) site is built by H94 and H96.

Belongs to the aldolase class II family. MtnB subfamily. Zn(2+) serves as cofactor.

It carries out the reaction 5-(methylsulfanyl)-D-ribulose 1-phosphate = 5-methylsulfanyl-2,3-dioxopentyl phosphate + H2O. It functions in the pathway amino-acid biosynthesis; L-methionine biosynthesis via salvage pathway; L-methionine from S-methyl-5-thio-alpha-D-ribose 1-phosphate: step 2/6. Its function is as follows. Catalyzes the dehydration of methylthioribulose-1-phosphate (MTRu-1-P) into 2,3-diketo-5-methylthiopentyl-1-phosphate (DK-MTP-1-P). In Pseudomonas savastanoi pv. phaseolicola (strain 1448A / Race 6) (Pseudomonas syringae pv. phaseolicola (strain 1448A / Race 6)), this protein is Methylthioribulose-1-phosphate dehydratase.